Here is a 287-residue protein sequence, read N- to C-terminus: tRNA pseudouridine synthase B (287 aa).

Residue Asp38 is the Nucleophile of the active site.

This sequence belongs to the pseudouridine synthase TruB family. Type 1 subfamily.

It carries out the reaction uridine(55) in tRNA = pseudouridine(55) in tRNA. In terms of biological role, responsible for synthesis of pseudouridine from uracil-55 in the psi GC loop of transfer RNAs. The chain is tRNA pseudouridine synthase B from Mycoplasma mobile (strain ATCC 43663 / 163K / NCTC 11711) (Mesomycoplasma mobile).